The sequence spans 559 residues: Formate--tetrahydrofolate ligase (559 aa).

ATP is bound at residue 68–75; the sequence is TPAGEGKT.

Belongs to the formate--tetrahydrofolate ligase family.

The catalysed reaction is (6S)-5,6,7,8-tetrahydrofolate + formate + ATP = (6R)-10-formyltetrahydrofolate + ADP + phosphate. It functions in the pathway one-carbon metabolism; tetrahydrofolate interconversion. This chain is Formate--tetrahydrofolate ligase, found in Mesorhizobium japonicum (strain LMG 29417 / CECT 9101 / MAFF 303099) (Mesorhizobium loti (strain MAFF 303099)).